A 305-amino-acid chain; its full sequence is DNA-directed RNA polymerase 35 kDa subunit (305 aa).

Belongs to the poxviridae DNA-directed RNA polymerase 35 kDa subunit family. The DNA-dependent RNA polymerase used for intermediate and late genes expression consists of eight subunits 147 kDa, 133 kDa, 35 kDa, 30 kDa, 22 kDa, 19 kDa, 18 kDa and 7 kDa totalling more than 500 kDa in mass. The same holoenzyme, with the addition of the transcription-specificity factor RAP94, is used for early gene expression.

The protein resides in the virion. It catalyses the reaction RNA(n) + a ribonucleoside 5'-triphosphate = RNA(n+1) + diphosphate. Part of the DNA-dependent RNA polymerase which catalyzes the transcription of viral DNA into RNA using the four ribonucleoside triphosphates as substrates. Responsible for the transcription of early, intermediate and late genes. DNA-dependent RNA polymerase associates with the early transcription factor (ETF), itself composed of D6 and A7, thereby allowing the early genes transcription. Late transcription, and probably also intermediate transcription, require newly synthesized RNA polymerase. This Cynomys gunnisoni (Gunnison's prairie dog) protein is DNA-directed RNA polymerase 35 kDa subunit (OPG156).